A 275-amino-acid polypeptide reads, in one-letter code: Putative methylglyoxal reductase DkgA (275 aa).

The Proton donor role is filled by Tyr-51. Substrate is bound at residue His-107. Residue 187–241 (SPLAQGGEGVFDQKVIRELADKYGKTPAQIVIRWHLDCGLVVIPKSVTPSRIAEN) coordinates NADP(+).

Belongs to the aldo/keto reductase family. As to quaternary structure, monomer.

Its subcellular location is the cytoplasm. The enzyme catalyses hydroxyacetone + NADP(+) = methylglyoxal + NADPH + H(+). Aldo-keto reductase that significantly contributes to cellular methylglyoxal detoxification by catalyzing the NADPH-dependent conversion of methylglyoxal to acetol. The chain is Putative methylglyoxal reductase DkgA from Salmonella typhi.